Here is a 413-residue protein sequence, read N- to C-terminus: Cyclic AMP-dependent transcription factor ATF-7 (413 aa).

A transactivation domain region spans residues 1–285 (MGDDRPFVCS…GMVVGTASTM (285 aa)). The segment at 7 to 31 (FVCSAPGCGQRFTNEDHLAVHKHKH) adopts a C2H2-type zinc-finger fold. Phosphothreonine; by MAPK11 is present on Thr51. A phosphothreonine mark is found at Thr53 and Thr101. 2 disordered regions span residues 81 to 140 (ASDD…TTKP) and 299 to 337 (HPDA…RRQR). A Glycyl lysine isopeptide (Lys-Gly) (interchain with G-Cter in SUMO1) cross-link involves residue Lys107. Low complexity-rich tracts occupy residues 114–126 (VDSS…ASSP) and 307–320 (QPQV…PSTG). The segment covering 326 to 337 (TVDEDPDERRQR) has biased composition (basic and acidic residues). Positions 332–395 (DERRQRFLER…AQLKQLLLAH (64 aa)) constitute a bZIP domain. The basic motif stretch occupies residues 334-354 (RRQRFLERNRAAASRCRQKRK). A leucine-zipper region spans residues 360 to 388 (LEKKAEELTSQNIQLSNEVTLLRNEVAQL).

Belongs to the bZIP family. Homodimer; binds DNA as homodimer. Heterodimer; heterodimerizes with other members of ATF family and with JUN family members. Interacts with JNK2; the interaction does not phosphorylate ATF7 but acts as a docking site for other ATF-associated partners such as JUN family members. Interacts (via its transactivation domain) with TAF12 the interaction potentiates the transactivation activity and is inhibited by ATF7 sumoylation. Interacts with TAF4; the interaction inhibits the TAF12-dependent transactivation. Interacts with MAPK9; the interaction does not phosphorylate ATF7 but acts as a docking site for ATF7-associated partners such as JUN. Interacts with Ku complex components XRCC6 and XRCC7. Interacts with TERT. In terms of processing, on EGF stimulation, phosphorylated first on Thr-53 allowing subsequent phosphorylation on Thr-51. This latter phosphorylation prevents sumoylation, increases binding to TAF12 and enhances transcriptional activity. Social isolation stress as well as TNF-alpha also induce the phosphorylation of ATF7. Phosphorylated in proliferating colonic and small intestinal epithelial cells. Post-translationally, sumoylation delays nuclear localization and inhibits transactivation activity through preventing binding to TAF12. RANBP2 appears to be the specific E3 ligase.

Its subcellular location is the nucleus. It localises to the nucleoplasm. The protein resides in the chromosome. It is found in the telomere. In terms of biological role, stress-responsive chromatin regulator that plays a role in various biological processes including innate immunological memory, adipocyte differentiation or telomerase regulation. In absence of stress, contributes to the formation of heterochromatin and heterochromatin-like structure by recruiting histone H3K9 tri- and di-methyltransferases thus silencing the transcription of target genes such as Htr5b, STAT1 in adipocytes, or genes involved in innate immunity in macrophages and adipocytes. Phosphorylation of ATF7 disrupts interactions with histone methyltransferase and enhances the association with coactivators containing histone acetyltransferase and/or histone demethylase, leading to disruption of the heterochromatin-like structure and subsequently transcriptional activation. In response to TNF-alpha, which is induced by various stresses, phosphorylated ATF7 and telomerase are released from telomeres leading to telomere shortening. Also plays a role in maintaining epithelial regenerative capacity and protecting against cell death during intestinal epithelial damage and repair. This is Cyclic AMP-dependent transcription factor ATF-7 (Atf7) from Mus musculus (Mouse).